Reading from the N-terminus, the 257-residue chain is Phosphonates import ATP-binding protein PhnC (257 aa).

Residues I4–L248 enclose the ABC transporter domain. Position 37 to 44 (G37 to S44) interacts with ATP.

The protein belongs to the ABC transporter superfamily. Phosphonates importer (TC 3.A.1.9.1) family. In terms of assembly, the complex is composed of two ATP-binding proteins (PhnC), two transmembrane proteins (PhnE) and a solute-binding protein (PhnD).

It localises to the cell membrane. It catalyses the reaction phosphonate(out) + ATP + H2O = phosphonate(in) + ADP + phosphate + H(+). In terms of biological role, part of the ABC transporter complex PhnCDE involved in phosphonates import. Responsible for energy coupling to the transport system. This Staphylococcus haemolyticus (strain JCSC1435) protein is Phosphonates import ATP-binding protein PhnC.